Reading from the N-terminus, the 59-residue chain is Large ribosomal subunit protein uL30 (59 aa).

The protein belongs to the universal ribosomal protein uL30 family. In terms of assembly, part of the 50S ribosomal subunit.

This Mycobacterium sp. (strain JLS) protein is Large ribosomal subunit protein uL30.